The following is a 393-amino-acid chain: Homogentisate phytyltransferase 1, chloroplastic (393 aa).

A chloroplast-targeting transit peptide spans 1 to 36 (MESLLSSSSLVSAAGGFCWKKQNLKLHSLSEIRVLR). Helical transmembrane passes span 108 to 128 (TVIG…EKVS), 133 to 153 (LLFT…IYIV), 170 to 190 (YLPL…VASF), 205 to 227 (PLFW…LPLL), 232 to 252 (FALV…QIAF), 271 to 291 (LIFA…FKDI), 314 to 334 (VFWT…LVGA), 338 to 358 (FIWS…TLWA), and 371 to 391 (ITSC…LLPF).

It belongs to the UbiA prenyltransferase family.

Its subcellular location is the plastid. It localises to the chloroplast membrane. The catalysed reaction is phytyl diphosphate + homogentisate + H(+) = 2-methyl-6-phytyl-1,4-benzene-1,4-diol + CO2 + diphosphate. The protein operates within cofactor biosynthesis; tocopherol biosynthesis. Involved in the synthesis of tocopherol (vitamin E). Catalyzes the condensation of homogentisate and phytyl diphosphate to form dimethylphytylhydrquinone. Low activity with geranylgeranyl diphosphate as substrate, but no activity with farnesyl diphosphate or solanesyl diphosphate. Tocopherol functions to limit lipid oxidation during seed desiccation, quiescence and germination and early seedling development. Protects thylakoid membrane lipids from photooxidation and is required for low-temperature adaptation. This Arabidopsis thaliana (Mouse-ear cress) protein is Homogentisate phytyltransferase 1, chloroplastic (HPT1).